The sequence spans 106 residues: L-rhamnose mutarotase (106 aa).

Residue Tyr20 participates in substrate binding. His24 acts as the Proton donor in catalysis. Substrate-binding positions include Tyr43 and 78 to 79; that span reads WW.

The protein belongs to the rhamnose mutarotase family. In terms of assembly, homodimer.

It localises to the cytoplasm. The enzyme catalyses alpha-L-rhamnose = beta-L-rhamnose. It functions in the pathway carbohydrate degradation; L-rhamnose degradation. In terms of biological role, involved in the anomeric conversion of L-rhamnose. The protein is L-rhamnose mutarotase (rhaM) of Rhizobium leguminosarum bv. trifolii.